The sequence spans 808 residues: Glutamate receptor 1.1 (808 aa).

Positions 1–19 (MEILFSISILALLFSGVVA) are cleaved as a signal peptide. Topologically, residues 20-541 (APSDDDVFEE…MWTFFDPFEK (522 aa)) are extracellular. N-linked (GlcNAc...) asparagine glycosylation is found at N288, N339, and N504. Residues 542–562 (SLWLASGAFFVLTGIVVWLVE) form a helical membrane-spanning segment. The Cytoplasmic portion of the chain corresponds to 563-570 (RSVNPEFQ). A helical transmembrane segment spans residues 571–591 (GSWGQQLSMMLWFGFSTIVFA). At 592 to 602 (HREKLQKMSSR) the chain is on the cytoplasmic side. Residues 603–623 (FLVIVWVFVVLILTSSYSANL) form a helical membrane-spanning segment. Residues 624–771 (TSTKTISRMQ…SKRFTFRELR (148 aa)) lie on the Extracellular side of the membrane. Residues 772 to 792 (GLFIIAGAAHVLVLALHLFHT) traverse the membrane as a helical segment. Over 793–808 (RQEVSRLCTKLQSFYK) the chain is Cytoplasmic.

Belongs to the glutamate-gated ion channel (TC 1.A.10.1) family. May form heteromers. Expressed predominantly in roots. First detected in the root-shoot junction, and later in lateral roots and at the margin of matures leaves.

The protein resides in the membrane. Glutamate-gated receptor that probably acts as a non-selective cation channel. Can transport sodium, potassium, and calcium ions. Functions as a carbon and nitrogen regulator and/or sensor that regulates carbon and nitrogen metabolism and distinct physiological process such as germination through the control of acid abscisic (ABA) biosynthesis. May be involved in light-signal transduction and calcium homeostasis via the regulation of calcium influx into cells. Seems required for the regulation of the abscisic acid (ABA) signaling pathway that modulates many aspects of plant physiology such as seed germination and response to drought (e.g. stomata opening). This chain is Glutamate receptor 1.1 (GLR1.1), found in Arabidopsis thaliana (Mouse-ear cress).